Here is a 70-residue protein sequence, read N- to C-terminus: MPQEIKEVKDFLIKARRKDARAVKIKKNETNTKFKIRCSRYLYTLVVKDMEKAEKLKQSLPPGLQVKEVK.

This sequence belongs to the eukaryotic ribosomal protein eL38 family.

The protein is Large ribosomal subunit protein eL38 (RpL38) of Anopheles gambiae (African malaria mosquito).